The primary structure comprises 130 residues: Large ribosomal subunit protein uL14 (130 aa).

It belongs to the universal ribosomal protein uL14 family. In terms of assembly, part of the 50S ribosomal subunit. Forms a cluster with proteins L3 and L19. In the 70S ribosome, L14 and L19 interact and together make contacts with the 16S rRNA in bridges B5 and B8.

Its function is as follows. Binds to 23S rRNA. Forms part of two intersubunit bridges in the 70S ribosome. This is Large ribosomal subunit protein uL14 from Leptospira interrogans serogroup Icterohaemorrhagiae serovar copenhageni (strain Fiocruz L1-130).